The chain runs to 124 residues: Large ribosomal subunit protein eL22y (124 aa).

The protein belongs to the eukaryotic ribosomal protein eL22 family.

The chain is Large ribosomal subunit protein eL22y (RPL22C) from Arabidopsis thaliana (Mouse-ear cress).